A 185-amino-acid chain; its full sequence is CASP-like protein 2C2 (185 aa).

Residues 1–22 (MAAAARVSEVKAEGLLRGACTA) are Cytoplasmic-facing. Residues 23 to 43 (LAAAAALLVGLSTQTETVLLV) form a helical membrane-spanning segment. Topologically, residues 44-53 (RKKATVKDVQ) are extracellular. A helical membrane pass occupies residues 54–74 (ALWVLAMAAAAAAGYHLLQLL). The Cytoplasmic segment spans residues 75–104 (KCLYLGRVGGARPCRRSSRALAWTCLLLDK). A helical membrane pass occupies residues 105–125 (ACAYTTFATTVAAAQACVVAL). The Extracellular portion of the chain corresponds to 126 to 146 (DGAHALQWTKLCNIYTRFCEQ). A helical transmembrane segment spans residues 147-167 (VAGSLVLGMLAAVGTAVLSAA). Residues 168–185 (SARNVFRHYASLETYAAH) lie on the Cytoplasmic side of the membrane.

The protein belongs to the Casparian strip membrane proteins (CASP) family. Homodimer and heterodimers.

The protein localises to the cell membrane. The chain is CASP-like protein 2C2 from Zea mays (Maize).